The following is a 203-amino-acid chain: Ribonuclease T (203 aa).

The 175-residue stretch at 11–185 folds into the Exonuclease domain; the sequence is VVVDVETGGF…YDTEKTAELF (175 aa). The Mg(2+) site is built by Asp-14, Glu-16, His-172, and Asp-177. Catalysis depends on His-172, which acts as the Proton donor/acceptor.

This sequence belongs to the RNase T family. As to quaternary structure, homodimer. Mg(2+) serves as cofactor.

Its function is as follows. Trims short 3' overhangs of a variety of RNA species, leaving a one or two nucleotide 3' overhang. Responsible for the end-turnover of tRNA: specifically removes the terminal AMP residue from uncharged tRNA (tRNA-C-C-A). Also appears to be involved in tRNA biosynthesis. This chain is Ribonuclease T, found in Pseudomonas putida (strain ATCC 47054 / DSM 6125 / CFBP 8728 / NCIMB 11950 / KT2440).